The primary structure comprises 269 residues: 4-hydroxy-tetrahydrodipicolinate reductase (269 aa).

Residues 13–18 (GASGRM) and Asp39 contribute to the NAD(+) site. Arg40 is an NADP(+) binding site. NAD(+)-binding positions include 101-103 (GTT) and 125-128 (APNM). His158 serves as the catalytic Proton donor/acceptor. His159 contacts (S)-2,3,4,5-tetrahydrodipicolinate. Lys162 serves as the catalytic Proton donor. Position 168 to 169 (168 to 169 (GT)) interacts with (S)-2,3,4,5-tetrahydrodipicolinate.

It belongs to the DapB family.

The protein resides in the cytoplasm. It carries out the reaction (S)-2,3,4,5-tetrahydrodipicolinate + NAD(+) + H2O = (2S,4S)-4-hydroxy-2,3,4,5-tetrahydrodipicolinate + NADH + H(+). The catalysed reaction is (S)-2,3,4,5-tetrahydrodipicolinate + NADP(+) + H2O = (2S,4S)-4-hydroxy-2,3,4,5-tetrahydrodipicolinate + NADPH + H(+). It functions in the pathway amino-acid biosynthesis; L-lysine biosynthesis via DAP pathway; (S)-tetrahydrodipicolinate from L-aspartate: step 4/4. Its function is as follows. Catalyzes the conversion of 4-hydroxy-tetrahydrodipicolinate (HTPA) to tetrahydrodipicolinate. In Bordetella bronchiseptica (strain ATCC BAA-588 / NCTC 13252 / RB50) (Alcaligenes bronchisepticus), this protein is 4-hydroxy-tetrahydrodipicolinate reductase.